We begin with the raw amino-acid sequence, 290 residues long: Fat storage-inducing transmembrane protein 1 (290 aa).

At Met1–Arg18 the chain is on the lumenal side. The chain crosses the membrane as a helical span at residues Thr19–Gly39. The Cytoplasmic segment spans residues Ser40–Arg54. A helical transmembrane segment spans residues Leu55–Asn75. At Pro76–Ser94 the chain is on the lumenal side. The chain crosses the membrane as a helical span at residues Ala95–Thr115. The Cytoplasmic portion of the chain corresponds to Arg116–Ala141. A helical transmembrane segment spans residues Phe142–Leu162. Residues His163 to Thr187 are Lumenal-facing. The active site involves His186. A helical membrane pass occupies residues Phe188–Leu208. Residues Ala209–Leu220 are Cytoplasmic-facing. The chain crosses the membrane as a helical span at residues Val221 to Ile241. Residues Tyr242–Lys249 are Lumenal-facing. His244 is a catalytic residue. A helical membrane pass occupies residues Val250 to Gln270. The Cytoplasmic portion of the chain corresponds to Pro271–Asn290.

Belongs to the FIT family. FIT1 subfamily.

Its subcellular location is the endoplasmic reticulum membrane. Its function is as follows. Plays an important role in the formation of lipid droplets (LDs) which are storage organelles at the center of lipid and energy homeostasis. Directly binds to diacylglycerol (DAGs) and triacylglycerol. This Sus scrofa (Pig) protein is Fat storage-inducing transmembrane protein 1.